Consider the following 329-residue polypeptide: RNA-binding protein CP33, chloroplastic (329 aa).

A chloroplast-targeting transit peptide spans 1-69 (MSSAYCSSAV…NIRRHRFFCA (69 aa)). Positions 77-104 (ADDEIQASVEEEEEVEEEGDEGEEEVEE) are enriched in acidic residues. 2 disordered regions span residues 77-117 (ADDE…EEGR) and 296-329 (SERE…NVSA). 2 consecutive RRM domains span residues 116–194 (GRLY…FPEV) and 219–297 (HKVY…LASE).

Its subcellular location is the plastid. The protein localises to the chloroplast. Could be involved in splicing and/or processing of chloroplast RNAs. The sequence is that of RNA-binding protein CP33, chloroplastic from Arabidopsis thaliana (Mouse-ear cress).